Reading from the N-terminus, the 244-residue chain is Venom nerve growth factor 2 (244 aa).

Positions 1–18 (MSMLCYTLIIAFLIGIWA) are cleaved as a signal peptide. Positions 19–125 (APKSEDNVPL…TLNRNIRAKR (107 aa)) are excised as a propeptide. The span at 47 to 66 (GLKTSRNTDQRHPAPKKAED) shows a compositional bias: basic and acidic residues. The disordered stretch occupies residues 47-69 (GLKTSRNTDQRHPAPKKAEDQEL). 2 cysteine pairs are disulfide-bonded: C139/C205 and C181/C233.

This sequence belongs to the NGF-beta family. As to quaternary structure, homodimer; non-covalently linked. As to expression, expressed by the venom gland.

It localises to the secreted. In terms of biological role, nerve growth factor is important for the development and maintenance of the sympathetic and sensory nervous systems. It stimulates division and differentiation of sympathetic and embryonic sensory neurons as well as basal forebrain cholinergic neurons in the brain. Its relevance in the snake venom is not clear. However, it has been shown to inhibit metalloproteinase-dependent proteolysis of platelet glycoprotein Ib alpha, suggesting a metalloproteinase inhibition to prevent metalloprotease autodigestion and/or protection against prey proteases. Binds a lipid between the two protein chains in the homodimer. The lipid-bound form promotes histamine relase from mouse mast cells, contrary to the lipid-free form. In Notechis scutatus scutatus (Mainland tiger snake), this protein is Venom nerve growth factor 2.